The following is a 296-amino-acid chain: Zinc finger protein 75A (296 aa).

Residues 1–66 (MYFSQEEWEL…VSPEFKDSAG (66 aa)) form the KRAB domain. 5 C2H2-type zinc fingers span residues 161-183 (FKCQ…QRIH), 189-211 (YKCQ…LTTH), 217-239 (YKCS…QRTH), 245-267 (FTCH…RRTH), and 273-295 (YTCS…QKLH).

It belongs to the krueppel C2H2-type zinc-finger protein family.

The protein resides in the nucleus. In terms of biological role, may be involved in transcriptional regulation. The chain is Zinc finger protein 75A (ZNF75A) from Homo sapiens (Human).